The primary structure comprises 311 residues: Bifunctional protein FolD (311 aa).

Position 174-176 (174-176) interacts with NADP(+); the sequence is GKG.

This sequence belongs to the tetrahydrofolate dehydrogenase/cyclohydrolase family. In terms of assembly, homodimer.

The catalysed reaction is (6R)-5,10-methylene-5,6,7,8-tetrahydrofolate + NADP(+) = (6R)-5,10-methenyltetrahydrofolate + NADPH. The enzyme catalyses (6R)-5,10-methenyltetrahydrofolate + H2O = (6R)-10-formyltetrahydrofolate + H(+). Its pathway is one-carbon metabolism; tetrahydrofolate interconversion. Catalyzes the oxidation of 5,10-methylenetetrahydrofolate to 5,10-methenyltetrahydrofolate and then the hydrolysis of 5,10-methenyltetrahydrofolate to 10-formyltetrahydrofolate. This is Bifunctional protein FolD from Pyrobaculum neutrophilum (strain DSM 2338 / JCM 9278 / NBRC 100436 / V24Sta) (Thermoproteus neutrophilus).